Here is a 999-residue protein sequence, read N- to C-terminus: Probable metabotropic glutamate receptor mgl-1 (999 aa).

L-glutamate is bound by residues serine 202, 223–225 (AST), tyrosine 273, glutamate 363, and lysine 455. Asparagine 518 is a glycosylation site (N-linked (GlcNAc...) asparagine). Transmembrane regions (helical) follow at residues 682–704 (SLVP…VVYV), 719–739 (LSYI…VLLS), 751–769 (TGIG…VKTN), 792–812 (VVMT…WLSV), 836–857 (HHFL…TYAV), 871–893 (FIGF…FFGT), and 904–929 (LCIS…IILF). The segment at 975-999 (DSTRRRSSRKTSQPTSTSSAHDTFL) is disordered. Residues 984–993 (KTSQPTSTSS) show a composition bias toward low complexity.

This sequence belongs to the G-protein coupled receptor 3 family.

The protein resides in the cell membrane. Its function is as follows. G-protein coupled receptor for glutamate. Ligand binding causes a conformation change that triggers signaling via guanine nucleotide-binding proteins (G proteins) and modulates the activity of down-stream effectors. The protein is Probable metabotropic glutamate receptor mgl-1 (mgl-1) of Caenorhabditis elegans.